A 278-amino-acid polypeptide reads, in one-letter code: Large ribosomal subunit protein uL2 (278 aa).

Disordered stretches follow at residues P29 to G57 and V224 to R278. Residues R258 to R278 are compositionally biased toward basic residues.

Belongs to the universal ribosomal protein uL2 family. In terms of assembly, part of the 50S ribosomal subunit. Forms a bridge to the 30S subunit in the 70S ribosome.

In terms of biological role, one of the primary rRNA binding proteins. Required for association of the 30S and 50S subunits to form the 70S ribosome, for tRNA binding and peptide bond formation. It has been suggested to have peptidyltransferase activity; this is somewhat controversial. Makes several contacts with the 16S rRNA in the 70S ribosome. This chain is Large ribosomal subunit protein uL2, found in Streptomyces griseus subsp. griseus (strain JCM 4626 / CBS 651.72 / NBRC 13350 / KCC S-0626 / ISP 5235).